The primary structure comprises 391 residues: MDMASESVGGKILFATDDFFAPAENLIKSDSPCFKEHEYTEFGKWMDGWETRRKRIPGHDWCVLRLGIQGVIRGFDVDVSYFTGDYAPRVSIQAANLEEDKLPEIPERGTRTGAAATPEEFEAIAELKSDDWSYLVPMTELKPGNPASGHNYFLVNSQQRWTHIRLNIFPDGGIARLRVFGTGQKDWTATDPKEPADLVAIAFGGVCVGFSNAKFGHPNNIIGVGGAKSMADGWETARRLDRPPILENDENGILLVPGCEWAVFRLAHPGVITRIEIDTKYFEGNAPDSCKVDGCILTTQEEEAVIRQKWILPAHKWKPLLPVTKLSPNQSHLFDSLTLELQDVITHARLTIVPDGGVSRLRLRGFPSSICLLRPREKPMLKFSVSFKANP.

The protein belongs to the allantoicase family.

In terms of biological role, the function of this enzyme is unclear as allantoicase activity is not known to exist in mammals. This chain is Probable inactive allantoicase, found in Homo sapiens (Human).